Consider the following 203-residue polypeptide: Synaptosomal-associated protein 25-B (203 aa).

The span at 1–11 (MADEADMRNEL) shows a compositional bias: basic and acidic residues. A disordered region spans residues 1–25 (MADEADMRNELTDMQARADQLGDES). 2 t-SNARE coiled-coil homology domains span residues 19 to 81 (DQLG…LTDL) and 137 to 199 (DARE…ATKM).

This sequence belongs to the SNAP-25 family.

It is found in the synapse. It localises to the synaptosome. The protein localises to the cell membrane. In terms of biological role, may play an important role in the synaptic function of specific neuronal systems. Associates with proteins involved in vesicle docking and membrane fusion. The sequence is that of Synaptosomal-associated protein 25-B (snap25b) from Carassius auratus (Goldfish).